The following is an 86-amino-acid chain: Cell division topological specificity factor (86 aa).

The protein belongs to the MinE family.

Its function is as follows. Prevents the cell division inhibition by proteins MinC and MinD at internal division sites while permitting inhibition at polar sites. This ensures cell division at the proper site by restricting the formation of a division septum at the midpoint of the long axis of the cell. This is Cell division topological specificity factor from Allorhizobium ampelinum (strain ATCC BAA-846 / DSM 112012 / S4) (Agrobacterium vitis (strain S4)).